The primary structure comprises 549 residues: Probable protein kinase UbiB (549 aa).

The Protein kinase domain occupies 123 to 501 (DFDDIPLASA…QQKAHKSNYL (379 aa)). ATP contacts are provided by residues 129 to 137 (LASASISQV) and lysine 152. Aspartate 287 (proton acceptor) is an active-site residue. 2 helical membrane passes run 498–518 (SNYL…LINQ) and 520–540 (ATLW…VLGW).

This sequence belongs to the ABC1 family. UbiB subfamily.

It localises to the cell inner membrane. The protein operates within cofactor biosynthesis; ubiquinone biosynthesis [regulation]. Is probably a protein kinase regulator of UbiI activity which is involved in aerobic coenzyme Q (ubiquinone) biosynthesis. The protein is Probable protein kinase UbiB of Shewanella halifaxensis (strain HAW-EB4).